Here is a 534-residue protein sequence, read N- to C-terminus: uncharacterized protein (534 aa).

A run of 5 helical transmembrane segments spans residues 4–22 (ILVL…RVSF), 24–46 (GISL…GWTI), 56–75 (ALFV…RGLA), 82–104 (AITG…RLLG), and 134–156 (PAAV…VLFV). The disordered stretch occupies residues 167-187 (GDSDGTDSASETSGQSSAEIA). Residues 172–187 (TDSASETSGQSSAEIA) are compositionally biased toward polar residues. 2 consecutive RCK C-terminal domains span residues 180–264 (GQSS…TLGE) and 265–349 (LQDT…AVGH). Transmembrane regions (helical) follow at residues 359 to 378 (LLSL…LSLQ), 382 to 401 (FSMS…ILGH), 408 to 430 (IRGS…LFLA), 445 to 467 (MERG…LVGF), 479 to 501 (WQSL…LTGA), and 511 to 533 (YVAA…VELI).

This sequence belongs to the AAE transporter (TC 2.A.81) family.

Its subcellular location is the cell membrane. This is an uncharacterized protein from Rhodopirellula baltica (strain DSM 10527 / NCIMB 13988 / SH1).